The sequence spans 250 residues: MAVTMRQMLEAGVHFGHQTRFWNPKMAPFIFGHRNKIHIINLEKTLPMYNDALKYARQLAANRGTILFVGTKRQSRDTIAEEAQRAGMPFVNARWLGGMLTNFKTLKVSIKRLKDMEAALEAGETERMSKKEALLFEREMAKLVKSIGGVKDMGGIPDAIFVVDVGYHKIAVTEANKLGIPVIAVVDTNHSPEGIDYVIPGNDDASKAVALYTAGVADAIVEGRANAVNEVVQAARGGDGDEFVEVNSEA.

This sequence belongs to the universal ribosomal protein uS2 family.

This Paraburkholderia phytofirmans (strain DSM 17436 / LMG 22146 / PsJN) (Burkholderia phytofirmans) protein is Small ribosomal subunit protein uS2.